The sequence spans 636 residues: DNA-directed RNA polymerase subunit beta' (636 aa).

The Zn(2+) site is built by C70, C72, C85, and C88. Residues D471, D473, and D475 each contribute to the Mg(2+) site.

Belongs to the RNA polymerase beta' chain family. RpoC1 subfamily. Requires Mg(2+) as cofactor. It depends on Zn(2+) as a cofactor.

The protein resides in the plastid. Its subcellular location is the cyanelle. The enzyme catalyses RNA(n) + a ribonucleoside 5'-triphosphate = RNA(n+1) + diphosphate. DNA-dependent RNA polymerase catalyzes the transcription of DNA into RNA using the four ribonucleoside triphosphates as substrates. This Cyanophora paradoxa protein is DNA-directed RNA polymerase subunit beta'.